Here is a 263-residue protein sequence, read N- to C-terminus: Protein phosphatase type 2A regulatory subunit RTS3 (263 aa).

2 disordered regions span residues methionine 1–arginine 62 and leucine 149–glycine 176. Low complexity predominate over residues leucine 46–arginine 61. Phosphoserine occurs at positions 172, 192, 214, and 238.

It localises to the cytoplasm. Its subcellular location is the nucleus. May be a component of a protein phosphatase type 2A (PP2A) complex. Negatively regulates SIT4 phosphatase, a modulators of caffeine sensitivity. This Saccharomyces cerevisiae (strain ATCC 204508 / S288c) (Baker's yeast) protein is Protein phosphatase type 2A regulatory subunit RTS3 (RTS3).